The chain runs to 141 residues: Arsenate reductase (141 aa).

The active-site Nucleophile; cysteine thioarsenate intermediate is cysteine 12.

It belongs to the ArsC family.

The enzyme catalyses [glutaredoxin]-dithiol + arsenate + glutathione + H(+) = glutathionyl-S-S-[glutaredoxin] + arsenite + H2O. In terms of biological role, involved in resistance to arsenate. Catalyzes the reduction of arsenate [As(V)] to arsenite [As(III)]. The chain is Arsenate reductase from Escherichia coli (strain K12).